The primary structure comprises 38 residues: Photosystem II reaction center protein X (38 aa).

A helical membrane pass occupies residues 9–29; that stretch reads IASLFAGAFIALAIGGVLVFI.

It belongs to the PsbX family. Type 1 subfamily. In terms of assembly, PSII is composed of 1 copy each of membrane proteins PsbA, PsbB, PsbC, PsbD, PsbE, PsbF, PsbH, PsbI, PsbJ, PsbK, PsbL, PsbM, PsbT, PsbX, PsbY, PsbZ, Psb30/Ycf12, at least 3 peripheral proteins of the oxygen-evolving complex and a large number of cofactors. It forms dimeric complexes.

It localises to the plastid. The protein resides in the chloroplast thylakoid membrane. Functionally, involved in the binding and/or turnover of quinones at the Q(B) site of photosystem II (PSII). PSII is a light-driven water plastoquinone oxidoreductase, using light energy to abstract electrons from H(2)O, generating a proton gradient subsequently used for ATP formation. This Phaeodactylum tricornutum (strain CCAP 1055/1) protein is Photosystem II reaction center protein X.